The chain runs to 292 residues: 31 kDa ribonucleoprotein, chloroplastic (292 aa).

Residues 88-166 (LKLFVGNLPF…RAIRVNAGPA (79 aa)) form the RRM 1 domain. The tract at residues 165–203 (PAPAKRENSSFGGGRGGNSSYGGGRDGNSSFGGARGGRS) is disordered. The tract at residues 167–207 (PAKRENSSFGGGRGGNSSYGGGRDGNSSFGGARGGRSVDSS) is linker (Gly-rich). Residues 175–190 (FGGGRGGNSSYGGGRD) show a composition bias toward gly residues. In terms of domain architecture, RRM 2 spans 208–286 (NRVYVGNLSW…RSIRVSAAEE (79 aa)).

As to expression, expressed at high levels in the leaves and seedlings, and lower levels are seen in the stems and roots.

It localises to the plastid. Its subcellular location is the chloroplast. This is 31 kDa ribonucleoprotein, chloroplastic from Nicotiana plumbaginifolia (Leadwort-leaved tobacco).